The chain runs to 646 residues: MGCCGCGSEEGSVRQWKPLEQRSCTDVLWLLIFVLFCIGMAIICGFAIASGAAQRLVFGYDSYGNICGHKNTEIKDVTMSGLDHTDKKYVFFFEPCNWDMVHLKILSVALCVTKCPDMDLKTLEDVRNFAKYNGSRLCLYNLDPTQYTSKNSKSCPILPVKSSKPIPFFHRCVPMDSGCKINFKALTTFVSYNSVLQRVITGVMTSKEIIVGLCLMSLVLSILLMVIIRYISKVLVWILAILTIIGSIGGTAVLWWLYADHKKTLKLDPSQGDVAADNVTALLVCAIIATVITVILLLLMLIMRKRVALTIALFHVAGKVFIHIPFLIFQSLWTFLALAFFWIYWIAVLLLLATAGYPQKKDQGYVEFKVSGPLQYTWIYHLVGLIWISEFILACQQMTIAGAVVTYYFTRDKHNLPATPILASMCRLIKYHLGTVAKGSFIITLIKIPQMILVYIHSQLKGKENACAKCMLKACMCCLWCLEKCLLYLNRNAYIATSINGTSFCTSAKDAIVILVENAMRVAAINTVGDFVLFLGKLLIVLVTGFVGIILLNYQRDYTVWVLPLIIICLFAFFVSHCFLSIYEMVVDVLFLCFAVDCKHNDGSPGREYYMDKSLMEFMDESRKAMRSVTGSGAEMKSMASGSDNA.

Residues 1 to 27 (MGCCGCGSEEGSVRQWKPLEQRSCTDV) lie on the Cytoplasmic side of the membrane. The chain crosses the membrane as a helical span at residues 28 to 48 (LWLLIFVLFCIGMAIICGFAI). Topologically, residues 49–207 (ASGAAQRLVF…RVITGVMTSK (159 aa)) are extracellular. Residue Asn-133 is glycosylated (N-linked (GlcNAc...) asparagine). The helical transmembrane segment at 208–228 (EIIVGLCLMSLVLSILLMVII) threads the bilayer. Topologically, residues 229–233 (RYISK) are cytoplasmic. A helical transmembrane segment spans residues 234–254 (VLVWILAILTIIGSIGGTAVL). The Extracellular portion of the chain corresponds to 255-281 (WWLYADHKKTLKLDPSQGDVAADNVTA). N-linked (GlcNAc...) asparagine glycosylation is present at Asn-278. A helical membrane pass occupies residues 282-302 (LLVCAIIATVITVILLLLMLI). The Cytoplasmic segment spans residues 303–308 (MRKRVA). A helical transmembrane segment spans residues 309–329 (LTIALFHVAGKVFIHIPFLIF). At 330–331 (QS) the chain is on the extracellular side. Residues 332–352 (LWTFLALAFFWIYWIAVLLLL) form a helical membrane-spanning segment. The Cytoplasmic portion of the chain corresponds to 353-373 (ATAGYPQKKDQGYVEFKVSGP). The chain crosses the membrane as a helical span at residues 374–394 (LQYTWIYHLVGLIWISEFILA). Residues 395–435 (CQQMTIAGAVVTYYFTRDKHNLPATPILASMCRLIKYHLGT) lie on the Extracellular side of the membrane. Residues 436–456 (VAKGSFIITLIKIPQMILVYI) form a helical membrane-spanning segment. Residues 457–530 (HSQLKGKENA…RVAAINTVGD (74 aa)) are Cytoplasmic-facing. Residues 531 to 551 (FVLFLGKLLIVLVTGFVGIIL) traverse the membrane as a helical segment. The Extracellular portion of the chain corresponds to 552–559 (LNYQRDYT). The helical transmembrane segment at 560-580 (VWVLPLIIICLFAFFVSHCFL) threads the bilayer. Topologically, residues 581 to 646 (SIYEMVVDVL…KSMASGSDNA (66 aa)) are cytoplasmic.

The protein belongs to the CTL (choline transporter-like) family. As to expression, present in myelinated structures from brain and spinal cord (at protein level).

The protein localises to the cell membrane. It is found in the mitochondrion outer membrane. It carries out the reaction choline(out) + n H(+)(in) = choline(in) + n H(+)(out). It catalyses the reaction ethanolamine(out) + n H(+)(in) = ethanolamine(in) + n H(+)(out). Probable choline transporter. May be involved in membrane synthesis and myelin production. The sequence is that of Choline transporter-like protein 1 (slc44a1) from Torpedo marmorata (Marbled electric ray).